The primary structure comprises 339 residues: Uracil nucleotide/cysteinyl leukotriene receptor (339 aa).

The Extracellular portion of the chain corresponds to 1–36 (MDGLETALPSLTDNASLAYSEQCGQETPLENMLFAC). An N-linked (GlcNAc...) asparagine glycan is attached at asparagine 14. Residues 37 to 57 (FYLLDFILAFVGNALALWLFI) traverse the membrane as a helical segment. The Cytoplasmic segment spans residues 58–64 (WDHKSGT). A helical transmembrane segment spans residues 65–85 (PANVFLMHLAVADLSCVLVLP). Over 86-105 (TRLVYHFSGNHWPFGEIPCR) the chain is Extracellular. Residues cysteine 104 and cysteine 181 are joined by a disulfide bond. A helical membrane pass occupies residues 106 to 126 (LTGFLFYLNMYASIYFLTCIS). Residues 127 to 147 (ADRFLAIVHPVKSLKLRRPLY) lie on the Cytoplasmic side of the membrane. The helical transmembrane segment at 148 to 168 (AHLACAFLWIVVAVAMAPLLV) threads the bilayer. Residues 169-195 (SPQTVQTNHTVVCLQLYREKASHHALA) are Extracellular-facing. Residue asparagine 176 is glycosylated (N-linked (GlcNAc...) asparagine). Residues 196-216 (SLAVAFTFPFITTVTCYLLII) traverse the membrane as a helical segment. At 217–232 (RSLRQGPRIEKHLKNK) the chain is on the cytoplasmic side. A helical membrane pass occupies residues 233–253 (AVRMIAMVLAIFLICFVPYHI). Topologically, residues 254-280 (HRSVYVLHYRGGGTSCSAQRALALGNR) are extracellular. A helical membrane pass occupies residues 281–301 (ITSCLTSLNGALDPVMYFFVA). At 302–339 (EKFRHALCNLLCSKRLTGPPPSFEGKTNESSLSARSEL) the chain is on the cytoplasmic side.

This sequence belongs to the G-protein coupled receptor 1 family. Expressed in brain, kidney, and heart. Highest level in brain.

The protein localises to the cell membrane. Dual specificity receptor for uracil nucleotides and cysteinyl leukotrienes (CysLTs). Signals through G(i) and inhibition of adenylyl cyclase. May mediate brain damage by nucleotides and CysLTs following ischemia. The chain is Uracil nucleotide/cysteinyl leukotriene receptor from Rattus norvegicus (Rat).